The sequence spans 495 residues: Tripartite motif-containing protein 5 (495 aa).

The residue at position 2 (A2) is an N-acetylalanine. Residues 15–60 form an RING-type zinc finger; that stretch reads CPICLELLTEPLSLHCGHSFCQACITANHKKSMLYKEGERSCPVCR. A Phosphoserine modification is found at S87. A B box-type zinc finger spans residues 92–133; the sequence is QKVDHCARHGEKLLLFCQEDRKVICWLCERSQEHRGHHTFLM. C97, H100, C119, and H125 together coordinate Zn(2+). A coiled-coil region spans residues 137–225; the sequence is AQEYHVKLQT…LTKSETEMVQ (89 aa). A required for interaction with GABARAP and for autophagy region spans residues 187–200; it reads FEQLREILDWEESN. Residues 283 to 495 form the B30.2/SPRY domain; that stretch reads LKGILDMFRE…VPMTLCSPSS (213 aa).

It belongs to the TRIM/RBCC family. Can form homodimers and homotrimers. In addition to lower-order dimerization, also exhibits a higher-order multimerization and both low- and high-order multimerizations are essential for its restriction activity. Interacts with BTBD1 and BTBD2. Interacts with PSMC4, PSMC5, PSMD7 and HSPA8/HSC70. Interacts (via B30.2/SPRY domain) with HSPA1A/B. Interacts with PSMC2, MAP3K7/TAK1, TAB2 and TAB3. Interacts with SQSTM1. Interacts with TRIM6 and TRIM34. Interacts with ULK1 (phosphorylated form), GABARAP, GABARAPL1, GABARAPL2, MAP1LC3A, MAP1LC3C and BECN1. Post-translationally, degraded in a proteasome-independent fashion in the absence of viral infection but in a proteasome-dependent fashion following exposure to restriction sensitive virus. Autoubiquitinated in a RING finger- and UBE2D2-dependent manner. Monoubiquitinated by TRIM21. Deubiquitinated by Yersinia YopJ. Ubiquitination may not lead to proteasomal degradation.

It is found in the cytoplasm. The protein localises to the nucleus. It catalyses the reaction S-ubiquitinyl-[E2 ubiquitin-conjugating enzyme]-L-cysteine + [acceptor protein]-L-lysine = [E2 ubiquitin-conjugating enzyme]-L-cysteine + N(6)-ubiquitinyl-[acceptor protein]-L-lysine.. It functions in the pathway protein modification; protein ubiquitination. In terms of biological role, capsid-specific restriction factor that prevents infection from non-host-adapted retroviruses. Blocks viral replication early in the life cycle, after viral entry but before reverse transcription. In addition to acting as a capsid-specific restriction factor, also acts as a pattern recognition receptor that activates innate immune signaling in response to the retroviral capsid lattice. Binding to the viral capsid triggers its E3 ubiquitin ligase activity, and in concert with the heterodimeric ubiquitin conjugating enzyme complex UBE2V1-UBE2N (also known as UBC13-UEV1A complex) generates 'Lys-63'-linked polyubiquitin chains, which in turn are catalysts in the autophosphorylation of the MAP3K7/TAK1 complex (includes TAK1, TAB2, and TAB3). Activation of the MAP3K7/TAK1 complex by autophosphorylation results in the induction and expression of NF-kappa-B and MAPK-responsive inflammatory genes, thereby leading to an innate immune response in the infected cell. Plays a role in regulating autophagy through activation of autophagy regulator BECN1 by causing its dissociation from its inhibitors BCL2 and TAB2. This chain is Tripartite motif-containing protein 5 (TRIM5), found in Pygathrix nemaeus (Red-shanked douc langur).